The following is a 73-amino-acid chain: UPF0154 protein BCG9842_B1526 (73 aa).

The chain crosses the membrane as a helical span at residues 3 to 23 (IWLGILVGVVALVAGVALGFF).

Belongs to the UPF0154 family.

It is found in the cell membrane. The chain is UPF0154 protein BCG9842_B1526 from Bacillus cereus (strain G9842).